Consider the following 600-residue polypeptide: Alpha-N-acetylgalactosaminide alpha-2,6-sialyltransferase 1 (600 aa).

Topologically, residues 1–14 are cytoplasmic; it reads MRSCLWRCRHLSQG. A helical; Signal-anchor for type II membrane protein membrane pass occupies residues 15-35; it reads VQWSLLLAVLVFFLFALPSFI. Over 36 to 600 the chain is Lumenal; it reads KEPQTKPSRH…PGPGTAKAKN (565 aa). Disordered stretches follow at residues 38 to 191 and 208 to 248; these read PQTK…AATT and GAVS…TQRN. Over residues 46–55 the composition is skewed to basic and acidic residues; sequence QRTENIKERS. Composition is skewed to polar residues over residues 84–94, 151–179, and 209–219; these read NALNTQTQPKA, TEAQ…ASRT, and AVSTRTRQKGV. Disulfide bonds link cysteine 279-cysteine 362 and cysteine 365-cysteine 533. Asparagine 300, asparagine 311, asparagine 331, asparagine 375, and asparagine 460 each carry an N-linked (GlcNAc...) asparagine glycan.

It belongs to the glycosyltransferase 29 family. In terms of processing, glycosylated; autosialylated. In terms of tissue distribution, expression is restricted to the gastrointestinal tract. Highly expressed in goblet cells. Also expressed in various tumor cells.

The protein localises to the golgi apparatus membrane. The catalysed reaction is a beta-D-galactosyl-(1-&gt;3)-N-acetyl-alpha-D-galactosaminyl derivative + CMP-N-acetyl-beta-neuraminate = a beta-D-galactosyl-(1-&gt;3)-[N-acetyl-alpha-neuraminyl-(2-&gt;6)]-N-acetyl-alpha-D-galactosaminyl derivative + CMP + H(+). The enzyme catalyses a 3-O-[N-acetyl-alpha-D-galactosaminyl]-L-seryl-[protein] + CMP-N-acetyl-beta-neuraminate = a 3-O-[N-acetyl-alpha-neuraminosyl-(2-&gt;6)-N-acetyl-alpha-D-galactosaminyl]-L-seryl-[protein] + CMP + H(+). It catalyses the reaction a 3-O-[N-acetyl-alpha-D-galactosaminyl]-L-threonyl-[protein] + CMP-N-acetyl-beta-neuraminate = a 3-O-[N-acetyl-alpha-neuraminosyl-(2-&gt;6)-N-acetyl-alpha-D-galactosaminyl]-L-threonyl-[protein] + CMP + H(+). It carries out the reaction a 3-O-[beta-D-galactosyl-(1-&gt;3)-N-acetyl-alpha-D-galactosaminyl]-L-seryl-[protein] + CMP-N-acetyl-beta-neuraminate = a 3-O-{beta-D-galactosyl-(1-&gt;3)-[N-acetyl-alpha-neuraminosyl-(2-&gt;6)]-N-acetyl-alpha-D-galactosaminyl}-L-seryl-[protein] + CMP + H(+). The catalysed reaction is a 3-O-[beta-D-galactosyl-(1-&gt;3)-N-acetyl-alpha-D-galactosaminyl]-L-threonyl-[protein] + CMP-N-acetyl-beta-neuraminate = a 3-O-{beta-D-galactosyl-(1-&gt;3)-[N-acetyl-alpha-neuraminosyl-(2-&gt;6)]-N-acetyl-alpha-D-galactosaminyl}-L-threonyl-[protein] + CMP + H(+). The enzyme catalyses a 3-O-[N-acetyl-alpha-neuraminyl-(2-&gt;3)-beta-D-galactosyl-(1-&gt;3)-N-acetyl-alpha-D-galactosaminyl]-L-threonyl-[protein] + CMP-N-acetyl-beta-neuraminate = a 3-O-{alpha-Neu5Ac-(2-&gt;3)-beta-D-Gal-(1-&gt;3)-[alpha-Neu5Ac-(2-&gt;6)]-alpha-D-GalNAc}-L-threonyl-[protein] + CMP + H(+). The protein operates within protein modification; protein glycosylation. Its function is as follows. Protein sialyltransferase specifically expressed in goblet cells that plays a key role in intestinal host-commensal homeostasis. Conjugates sialic acid with an alpha-2-6 linkage to N-acetylgalactosamine (GalNAc) glycan chains linked to serine or threonine in glycoproteins. Catalyzes the formation of the sialyl-Tn (S-Tn) antigen, an antigen found in intestinal goblet cells, as well as ulcerative colitis (UC) and various cancers. Protein sialylation in globlet cells is essential for mucus integrity and is required to protect the intestinal mucus against excessive bacterial proteolytic degradation. The polypeptide is Alpha-N-acetylgalactosaminide alpha-2,6-sialyltransferase 1 (Homo sapiens (Human)).